The following is a 154-amino-acid chain: SsrA-binding protein (154 aa).

The segment at 134 to 154 is disordered; that stretch reads DKREDIKKRDQERELSRRFKN.

Belongs to the SmpB family.

It is found in the cytoplasm. Its function is as follows. Required for rescue of stalled ribosomes mediated by trans-translation. Binds to transfer-messenger RNA (tmRNA), required for stable association of tmRNA with ribosomes. tmRNA and SmpB together mimic tRNA shape, replacing the anticodon stem-loop with SmpB. tmRNA is encoded by the ssrA gene; the 2 termini fold to resemble tRNA(Ala) and it encodes a 'tag peptide', a short internal open reading frame. During trans-translation Ala-aminoacylated tmRNA acts like a tRNA, entering the A-site of stalled ribosomes, displacing the stalled mRNA. The ribosome then switches to translate the ORF on the tmRNA; the nascent peptide is terminated with the 'tag peptide' encoded by the tmRNA and targeted for degradation. The ribosome is freed to recommence translation, which seems to be the essential function of trans-translation. This Leuconostoc mesenteroides subsp. mesenteroides (strain ATCC 8293 / DSM 20343 / BCRC 11652 / CCM 1803 / JCM 6124 / NCDO 523 / NBRC 100496 / NCIMB 8023 / NCTC 12954 / NRRL B-1118 / 37Y) protein is SsrA-binding protein.